Reading from the N-terminus, the 128-residue chain is Protein Wnt-10 (128 aa).

5 disulfide bridges follow: cysteine 3–cysteine 17, cysteine 5–cysteine 12, cysteine 74–cysteine 105, cysteine 90–cysteine 100, and cysteine 127–cysteine 128. Residue serine 9 is the site of O-palmitoleoyl serine; by PORCN attachment. Asparagine 91 is a glycosylation site (N-linked (GlcNAc...) asparagine).

This sequence belongs to the Wnt family. Palmitoleoylation is required for efficient binding to frizzled receptors. Depalmitoleoylation leads to Wnt signaling pathway inhibition. In terms of tissue distribution, in embryo, in dorsal hindbrain; in adults, in brain.

Its subcellular location is the secreted. The protein localises to the extracellular space. It is found in the extracellular matrix. In terms of biological role, ligand for members of the frizzled family of seven transmembrane receptors. Probable developmental protein. May be a signaling molecule which affects the development of discrete regions of tissues. Is likely to signal over only few cell diameters. The chain is Protein Wnt-10 (wnt10) from Xenopus laevis (African clawed frog).